We begin with the raw amino-acid sequence, 348 residues long: MADIYRFPKFSYEDNGTVEPLPLRTGPDKKAIPYIRIIKVGDPPKHGVRYLDLLLLGFFETPKQTTNLGSVSDLTEPTSYSICGSGSLPIGVAKYYGTDQELLKACTDLRITVRRTVRAGEMIVYMVDSIGAPLLPWSGRLRQGMIFNANKVALAPQCLPVDKDIRFRVVFVNGTSLGAITIAKIPKTLADLALPNSISVNLLVTLKTGISTEQKGVLPVLDDQGEKKLNFMVHLGLIRRKVGKIYSVEYCKSKIERMRLIFSLGLIGGISFHVQVTGTLSKTFMSQLAWKRAVCFPLMDVNPHMNLVIWAASVEITGVDAVFQPAIPRDFRYYPNVVAKNIGRIRKL.

The YLDL motif motif lies at 50-53; the sequence is YLDL. Phosphoserine; by host is present on Ser70.

It belongs to the morbillivirus/respirovirus/rubulavirus M protein family. Homomultimer. Binds to the cytoplasmic regions of F and HN proteins. Interacts with nucleocapsid. Interacts with human alpha-tubulin and beta-tubulin. Interacts with host ANP32B. A large portion is phosphorylated in the cytoplasm, but not in virion. However, this phosphorylation is not essential for virus replication.

It is found in the virion. It localises to the host cytoplasm. Its subcellular location is the host cell membrane. Its function is as follows. Plays a crucial role in virion assembly and budding. Forms a shell at the inner face of the plasma membrane and concentrates the HN and F glycoproteins. Acts as a negative regulator for transcription and replication by sticking to the nucleocapsid. This effect might be regulated by the cytoplasmic interaction with tubulin that dissociates the M protein from the nucleocapsid. The sequence is that of Matrix protein (M) from Sendai virus (strain Fushimi) (SeV).